The sequence spans 510 residues: Putative serine protease K12H4.7 (510 aa).

Residues 1–19 form the signal peptide; the sequence is MKTLLAVLLAACVLTQVLS. The Charge relay system role is filled by Ser187. Residue Asn234 is glycosylated (N-linked (GlcNAc...) asparagine). The active-site Charge relay system is Asp452. N-linked (GlcNAc...) asparagine glycosylation is present at Asn473. His477 (charge relay system) is an active-site residue.

This sequence belongs to the peptidase S28 family.

The chain is Putative serine protease K12H4.7 from Caenorhabditis elegans.